The chain runs to 335 residues: D-alanine--D-alanine ligase (335 aa).

In terms of domain architecture, ATP-grasp spans 124–330; that stretch reads KMWFSALGVP…FTEYLSDVIS (207 aa). 154-209 provides a ligand contact to ATP; the sequence is AFDTWGSVFIKAASQGSSVGCYKVDVRDNIAKVLEEAFGYAPYVVVEKTIKARELE. 3 residues coordinate Mg(2+): D284, E297, and N299.

This sequence belongs to the D-alanine--D-alanine ligase family. Requires Mg(2+) as cofactor. It depends on Mn(2+) as a cofactor.

Its subcellular location is the cytoplasm. It carries out the reaction 2 D-alanine + ATP = D-alanyl-D-alanine + ADP + phosphate + H(+). It functions in the pathway cell wall biogenesis; peptidoglycan biosynthesis. Its function is as follows. Cell wall formation. In Shewanella denitrificans (strain OS217 / ATCC BAA-1090 / DSM 15013), this protein is D-alanine--D-alanine ligase.